The chain runs to 812 residues: MAQMLLHGTLHATIFEAASLSNPHRASGSAPKFIRKFVEGIEDTVGVGKGATKVYSTIDLEKARVGRTRMITNEPINPRWYESFHIYCAHMASNVIFTVKIDNPIGATNIGRAYLPVQELLNGEEIDRWLDICDNNREPVGESKIHVKLQYFDVSKDRNWARGVRSTKYPGVPYTFFSQRQGCKVTLYQDAHVPDNFIPKIPLADGKNYEPHRCWEDIFDAISNAQHLIYITGWSVYTEITLVRDSNRPKPGGDVTLGELLKKKASEGVRVLMLVWDDRTSVGLLKRDGLMATHDEETENYFHGSDVNCVLCPRNPDDSGSIVQDLSISTMFTHHQKIVVVDHELPNQGSQQRRIVSFVGGLDLCDGRYDTQYHSLFRTLDSTHHDDFHQPNFATASIKKGGPREPWHDIHSRLEGPIAWDVLYNFEQRWRKQGGKDLLLQLRDLSDTIIPPSPVMFPEDRETWNVQLFRSIDGGAAFGFPDTPEEAAKAGLVSGKDQIIDRSIQDAYIHAIRRAKNFIYIENQYFLGSSYAWKPEGIKPEDIGALHLIPKELALKVVSKIEAGERFTVYVVVPMWPEGVPESGSVQAILDWQRRTMEMMYTDITEALQAKGIEANPKDYLTFFCLGNREVKQAGEYQPEEQPEADTDYSRAQEARRFMIYVHTKMMIVDDEYIIIGSANINQRSMDGARDSEIAMGGYQPYHLATRQPARGQIHGFRMALWYEHLGMLDDVFQRPESLECVQKVNRIAEKYWDMYSSDDLQQDLPGHLLSYPIGVASDGVVTELPGMEYFPDTRARVLGAKSDYMPPILTS.

A propeptide spanning residues Met-1–Gly-46 is cleaved from the precursor. The C2 domain occupies Met-1–Leu-130. Asp-190 provides a ligand contact to Ca(2+). Residues Thr-330–Arg-368 form the PLD phosphodiesterase 1 domain. Catalysis depends on residues His-335, Lys-337, and Asp-342. Residue His-335 participates in a 1,2-diacyl-sn-glycero-3-phosphate binding. The Ca(2+) site is built by His-374 and His-408. A 1,2-diacyl-sn-glycero-3-phosphate contacts are provided by Gln-524 and His-663. A PLD phosphodiesterase 2 domain is found at Phe-658–Ser-685. Residues His-663, Lys-665, and Asp-670 contribute to the active site. Glu-724 serves as a coordination point for Ca(2+).

This sequence belongs to the phospholipase D family. C2-PLD subfamily. Monomer. Ca(2+) is required as a cofactor. Expressed in leaves, roots, developing seeds and cultured cells.

The catalysed reaction is a 1,2-diacyl-sn-glycero-3-phosphocholine + H2O = a 1,2-diacyl-sn-glycero-3-phosphate + choline + H(+). Its function is as follows. Hydrolyzes glycerol-phospholipids at the terminal phosphodiesteric bond. Plays an important role in various cellular processes. The polypeptide is Phospholipase D alpha 1 (PLD1) (Oryza sativa subsp. japonica (Rice)).